We begin with the raw amino-acid sequence, 166 residues long: Phosphopantetheine adenylyltransferase (166 aa).

Ser11 lines the substrate pocket. ATP is bound by residues 11 to 12 (SF) and His19. The substrate site is built by Lys43, Leu75, and Arg89. ATP contacts are provided by residues 90–92 (GLR), Glu100, and 125–131 (YGYLSSS).

This sequence belongs to the bacterial CoaD family. In terms of assembly, homohexamer. It depends on Mg(2+) as a cofactor.

It is found in the cytoplasm. It carries out the reaction (R)-4'-phosphopantetheine + ATP + H(+) = 3'-dephospho-CoA + diphosphate. It participates in cofactor biosynthesis; coenzyme A biosynthesis; CoA from (R)-pantothenate: step 4/5. Reversibly transfers an adenylyl group from ATP to 4'-phosphopantetheine, yielding dephospho-CoA (dPCoA) and pyrophosphate. The protein is Phosphopantetheine adenylyltransferase of Syntrophotalea carbinolica (strain DSM 2380 / NBRC 103641 / GraBd1) (Pelobacter carbinolicus).